Reading from the N-terminus, the 298-residue chain is MQLEKMITEGSNTASAEIDRVSTLEMCRIINDEDKTVPLAVERVLPDIAAAIDVIHAQVSGGGRLIYLGAGTSGRLGILDASECPPTYGVKPGLVVGLIAGGEYAIQHAVEGTEDSREGGINDLKNINLTAQDVVVGIAASGRTPYVIAGLEYARQLGCRTVGISCNPGSAVSTTAEFAITPIVGAEVVTGSSRMKAGTAQKLVLNMLSTGLMIKSGKVFGNLMVDVVATNEKLHVRQVNIVKNATGCNAEQAEAALIACERNCKTAIVMVLKNLDAAEAKKRLDQHGGFIRQVLDKE.

The SIS domain occupies 55 to 218 (IHAQVSGGGR…STGLMIKSGK (164 aa)). Glutamate 83 (proton donor) is an active-site residue. Residue glutamate 114 is part of the active site.

The protein belongs to the GCKR-like family. MurNAc-6-P etherase subfamily. As to quaternary structure, homodimer.

The enzyme catalyses N-acetyl-D-muramate 6-phosphate + H2O = N-acetyl-D-glucosamine 6-phosphate + (R)-lactate. The protein operates within amino-sugar metabolism; 1,6-anhydro-N-acetylmuramate degradation. It functions in the pathway amino-sugar metabolism; N-acetylmuramate degradation. It participates in cell wall biogenesis; peptidoglycan recycling. Functionally, specifically catalyzes the cleavage of the D-lactyl ether substituent of MurNAc 6-phosphate, producing GlcNAc 6-phosphate and D-lactate. Together with AnmK, is also required for the utilization of anhydro-N-acetylmuramic acid (anhMurNAc) either imported from the medium or derived from its own cell wall murein, and thus plays a role in cell wall recycling. This Shigella sonnei (strain Ss046) protein is N-acetylmuramic acid 6-phosphate etherase.